The following is a 286-amino-acid chain: Shikimate dehydrogenase (NADP(+)) (286 aa).

Residues 21 to 23 and T68 each bind shikimate; that span reads TLS. The active-site Proton acceptor is K72. Position 84 (D84) interacts with NADP(+). The shikimate site is built by N93 and D108. Residues 132–136 and L226 each bind NADP(+); that span reads GYGGA. Shikimate is bound at residue Y228. G249 serves as a coordination point for NADP(+).

Belongs to the shikimate dehydrogenase family. In terms of assembly, homodimer.

It catalyses the reaction shikimate + NADP(+) = 3-dehydroshikimate + NADPH + H(+). Its pathway is metabolic intermediate biosynthesis; chorismate biosynthesis; chorismate from D-erythrose 4-phosphate and phosphoenolpyruvate: step 4/7. In terms of biological role, involved in the biosynthesis of the chorismate, which leads to the biosynthesis of aromatic amino acids. Catalyzes the reversible NADPH linked reduction of 3-dehydroshikimate (DHSA) to yield shikimate (SA). The chain is Shikimate dehydrogenase (NADP(+)) from Thermosynechococcus vestitus (strain NIES-2133 / IAM M-273 / BP-1).